Reading from the N-terminus, the 298-residue chain is Protease HtpX homolog (298 aa).

The next 2 helical transmembrane spans lie at 14 to 34 and 39 to 59; these read VVLL…AGYL and YAMG…SMIF. Zn(2+) is bound at residue His143. Residue Glu144 is part of the active site. His147 contacts Zn(2+). The next 2 membrane-spanning stretches (helical) occupy residues 158-178 and 197-217; these read IAVA…RMLW and IITL…ASLI. Glu226 serves as a coordination point for Zn(2+).

The protein belongs to the peptidase M48B family. Requires Zn(2+) as cofactor.

It is found in the cell membrane. This chain is Protease HtpX homolog, found in Streptococcus pyogenes serotype M28 (strain MGAS6180).